The sequence spans 187 residues: Adenine phosphoribosyltransferase (187 aa).

An AMP-binding site is contributed by 133–137 (ATGGS).

The protein belongs to the purine/pyrimidine phosphoribosyltransferase family. As to quaternary structure, homodimer. It depends on Mg(2+) as a cofactor.

The protein localises to the cytoplasm. It localises to the nucleus. It catalyses the reaction AMP + diphosphate = 5-phospho-alpha-D-ribose 1-diphosphate + adenine. It functions in the pathway purine metabolism; AMP biosynthesis via salvage pathway; AMP from adenine: step 1/1. Functionally, catalyzes a salvage reaction resulting in the formation of AMP, that is energically less costly than de novo synthesis. The protein is Adenine phosphoribosyltransferase (APT1) of Eremothecium gossypii (strain ATCC 10895 / CBS 109.51 / FGSC 9923 / NRRL Y-1056) (Yeast).